The primary structure comprises 62 residues: UPF0291 protein CLD_1956 (62 aa).

The protein belongs to the UPF0291 family.

Its subcellular location is the cytoplasm. This chain is UPF0291 protein CLD_1956, found in Clostridium botulinum (strain Okra / Type B1).